Reading from the N-terminus, the 1046-residue chain is UDP-N-acetylglucosamine--peptide N-acetylglucosaminyltransferase 110 kDa subunit (1046 aa).

Ala-2 carries the N-acetylalanine modification. Phosphoserine; by GSK3-beta; alternate occurs at positions 3 and 4. Residues Ser-3 and Ser-4 are each glycosylated (O-linked (GlcNAc) serine; alternate). A Phosphoserine modification is found at Ser-20. TPR repeat units follow at residues 21–54 (FQGL…EPDN), 89–122 (AEAY…KPDF), 123–156 (IDGY…NPDL), 157–190 (YCVR…QPNF), 191–224 (AVAW…DPNF), 225–258 (LDAY…SPNH), 259–292 (AVVH…QPHF), 293–326 (PDAY…CPTH), 327–360 (ADSL…FPEF), 361–394 (AAAH…SPTF), 395–428 (ADAY…NPAF), and 429–462 (ADAH…KPDF). Ser-399 is a glycosylation site (O-linked (GlcNAc) serine; by autocatalysis). Thr-454 is subject to Phosphothreonine. A TPR 13; truncated repeat occupies 463-473 (PDAYCNLAHCL). The DFP motif motif lies at 464–466 (DAY). Residues 487–503 (KKLVSIVADQLEKNRLP) carry the Nuclear localization signal motif. His-508 functions as the Proton acceptor in the catalytic mechanism. Residues Gln-849, Lys-852, 906 to 908 (APK), 911 to 914 (HVRR), 930 to 932 (HTT), and Asp-935 each bind UDP. The residue at position 989 (Tyr-989) is a Phosphotyrosine. The required for phosphatidylinositol 3,4,5-triphosphate binding stretch occupies residues 991-1010 (KKIRGKVWKQRISSPLFNTK).

Belongs to the glycosyltransferase 41 family. O-GlcNAc transferase subfamily. In terms of assembly, monomer; may exist in different oligomerization states in cells. Homotrimer, oligomerizes via TPR repeats 6 and 7. Trimerization is not necessary for activity in vitro, however it increases affinity for UDP-GlcNAc. Component of a THAP1/THAP3-HCFC1-OGT complex. Component of the NSL complex at least composed of MOF/KAT8, KANSL1, KANSL2, KANSL3, MCRS1, PHF20, OGT1/OGT, WDR5 and HCFC1. Found in a complex with KIF5B, RHOT1, RHOT2 and TRAK1. Found in a complex composed of at least SINHCAF, SIN3A, HDAC1, SAP30, RBBP4, OGT and TET1. Component of a complex composed of KMT2E/MLL5, OGT and USP7; the complex stabilizes KMT2E/MLL5, preventing KMT2E/MLL5 ubiquitination and proteasomal-mediated degradation. Interacts (via TPRs 1-6) with SIN3A; the interaction mediates transcriptional repression in parallel with histone deacetylase. Interacts (via TPR 5-6) with TET1, TET2 and TET3. Interacts (via TPR repeats 6 and 7) with ATXN10. Interacts with NSD2. Interacts with PROSER1; this interaction mediates TET2 O-GlcNAcylation and stability by promoting the interaction between OGT and TET2. In terms of processing, ubiquitinated by the SCF(FBXO31) complex, leading to its proteasomal degradation. Phosphorylation on Ser-3 or Ser-4 by GSK3-beta positively regulates its activity. Phosphorylation at Thr-454 by AMPK promotes nuclear localization. Post-translationally, glycosylated via autocatalysis; O-GlcNAcylation at Ser-399 promotes nuclear localization.

Its subcellular location is the nucleus. The protein resides in the cytoplasm. It carries out the reaction L-seryl-[protein] + UDP-N-acetyl-alpha-D-glucosamine = 3-O-(N-acetyl-beta-D-glucosaminyl)-L-seryl-[protein] + UDP + H(+). The enzyme catalyses L-threonyl-[protein] + UDP-N-acetyl-alpha-D-glucosamine = 3-O-(N-acetyl-beta-D-glucosaminyl)-L-threonyl-[protein] + UDP + H(+). Its pathway is protein modification; protein glycosylation. Its activity is regulated as follows. Inhibited by UDP. In terms of biological role, catalyzes the transfer of a single N-acetylglucosamine from UDP-GlcNAc to a serine or threonine residue in cytoplasmic and nuclear proteins resulting in their modification with a beta-linked N-acetylglucosamine (O-GlcNAc). Glycosylates a large and diverse number of proteins including histone H2B, AKT1, AMPK, ATG4B, CAPRIN1, EZH2, FNIP1, GSDMD, KRT7, LMNA, LMNB1, LMNB2, RPTOR, HOXA1, PFKL, KMT2E/MLL5, MAPT/TAU, TET2, RBL2, RET, NOD2 and HCFC1. Can regulate their cellular processes via cross-talk between glycosylation and phosphorylation or by affecting proteolytic processing. Involved in insulin resistance in muscle and adipocyte cells via glycosylating insulin signaling components and inhibiting the 'Thr-308' phosphorylation of AKT1, enhancing IRS1 phosphorylation and attenuating insulin signaling. Involved in glycolysis regulation by mediating glycosylation of 6-phosphofructokinase PFKL, inhibiting its activity. Plays a key role in chromatin structure by mediating O-GlcNAcylation of 'Ser-112' of histone H2B: recruited to CpG-rich transcription start sites of active genes via its interaction with TET proteins (TET1, TET2 or TET3). As part of the NSL complex indirectly involved in acetylation of nucleosomal histone H4 on several lysine residues. O-GlcNAcylation of 'Ser-75' of EZH2 increases its stability, and facilitating the formation of H3K27me3 by the PRC2/EED-EZH2 complex. Stabilizes KMT2E/MLL5 by mediating its glycosylation, thereby preventing KMT2E/MLL5 ubiquitination. Regulates circadian oscillation of the clock genes and glucose homeostasis in the liver. Stabilizes clock proteins BMAL1 and CLOCK through O-glycosylation, which prevents their ubiquitination and subsequent degradation. Promotes the CLOCK-BMAL1-mediated transcription of genes in the negative loop of the circadian clock such as PER1/2 and CRY1/2. O-glycosylates HCFC1 and regulates its proteolytic processing and transcriptional activity. Component of a THAP1/THAP3-HCFC1-OGT complex that is required for the regulation of the transcriptional activity of RRM1. Regulates mitochondrial motility in neurons by mediating glycosylation of TRAK1. Promotes autophagy by mediating O-glycosylation of ATG4B. Acts as a regulator of mTORC1 signaling by mediating O-glycosylation of RPTOR and FNIP1: O-GlcNAcylation of RPTOR in response to glucose sufficiency promotes activation of the mTORC1 complex. Its function is as follows. Catalyzes the transfer of a single N-acetylglucosamine from UDP-GlcNAc to a serine or threonine residue. Acts on cytoplasmic and nuclear proteins resulting in their modification with a beta-linked N-acetylglucosamine (O-GlcNAc). Glycosylates a large and diverse number of proteins including histone H2B, AKT1, ATG4B, EZH2, PFKL, KMT2E/MLL5, MAPT/TAU, NOD2 and HCFC1. Can regulate their cellular processes via cross-talk between glycosylation and phosphorylation or by affecting proteolytic processing. Probably by glycosylating KMT2E/MLL5, stabilizes KMT2E/MLL5 by preventing its ubiquitination. Involved in insulin resistance in muscle and adipocyte cells via glycosylating insulin signaling components and inhibiting the 'Thr-308' phosphorylation of AKT1, enhancing IRS1 phosphorylation and attenuating insulin signaling. Involved in glycolysis regulation by mediating glycosylation of 6-phosphofructokinase PFKL, inhibiting its activity. Component of a THAP1/THAP3-HCFC1-OGT complex that is required for the regulation of the transcriptional activity of RRM1. Plays a key role in chromatin structure by mediating O-GlcNAcylation of 'Ser-112' of histone H2B: recruited to CpG-rich transcription start sites of active genes via its interaction with TET proteins (TET1, TET2 or TET3). As part of the NSL complex indirectly involved in acetylation of nucleosomal histone H4 on several lysine residues. O-GlcNAcylation of 'Ser-75' of EZH2 increases its stability, and facilitating the formation of H3K27me3 by the PRC2/EED-EZH2 complex. Regulates circadian oscillation of the clock genes and glucose homeostasis in the liver. Stabilizes clock proteins BMAL1 and CLOCK through O-glycosylation, which prevents their ubiquitination and subsequent degradation. Promotes the CLOCK-BMAL1-mediated transcription of genes in the negative loop of the circadian clock such as PER1/2 and CRY1/2. O-glycosylates HCFC1 and regulates its proteolytic processing and transcriptional activity. Regulates mitochondrial motility in neurons by mediating glycosylation of TRAK1. Glycosylates HOXA1. O-glycosylates FNIP1. Promotes autophagy by mediating O-glycosylation of ATG4B. This chain is UDP-N-acetylglucosamine--peptide N-acetylglucosaminyltransferase 110 kDa subunit (OGT), found in Oryctolagus cuniculus (Rabbit).